The chain runs to 616 residues: Homeodomain-interacting protein kinase 4 (616 aa).

The region spanning 11 to 347 is the Protein kinase domain; sequence YDIIEVLGKG…PSAALRHPFV (337 aa). ATP-binding positions include 17 to 25 and Lys40; that span reads LGKGTFGEV. Asp136 (proton acceptor) is an active-site residue. A disordered region spans residues 485–616; it reads RHKARKPPAG…SFLQHVTGHH (132 aa). Over residues 496-511 the composition is skewed to polar residues; sequence KSDSNLSNLIRLSQVS. Position 511 is a phosphoserine (Ser511).

The protein belongs to the protein kinase superfamily. CMGC Ser/Thr protein kinase family. HIPK subfamily. Autophosphorylated.

It is found in the cytoplasm. It catalyses the reaction L-seryl-[protein] + ATP = O-phospho-L-seryl-[protein] + ADP + H(+). The enzyme catalyses L-threonyl-[protein] + ATP = O-phospho-L-threonyl-[protein] + ADP + H(+). Its function is as follows. Protein kinase that phosphorylates TP53, and thus induces TP53 repression of BIRC5 promoter. May act as a corepressor of transcription factors (Potential). The chain is Homeodomain-interacting protein kinase 4 (HIPK4) from Macaca fascicularis (Crab-eating macaque).